The sequence spans 245 residues: DNA terminal protein (245 aa).

Residues 4-55 carry the Nuclear localization signal motif; sequence KRLKKKLETKRKKSLLVSEGYSKKETKKLKGRELETVYKKKAHNRKNRERAR. An O-(5'-phospho-DNA)-tyrosine modification is found at Tyr194.

In terms of assembly, interacts with the DNA-binding protein P1.

The protein resides in the virion. Functionally, acts as a primer for viral genomic replication. DNA terminal protein is covalently linked to the 5'-ends of both strands of the genome through a phosphodiester bond between the beta-hydroxyl group of a tyrosine residue and the 5'-phosphate of the terminal deoxythymidylate. This protein is essential for DNA replication and is involved in the priming of DNA elongation. This chain is DNA terminal protein, found in Bacillus thuringiensis (Bacillus thuringiensis bacteriophage Bam35c).